The sequence spans 994 residues: Glycine dehydrogenase (decarboxylating), mitochondrial (994 aa).

The N-terminal 21 residues, 1 to 21 (MLKLLRNNGINKLKSNLIRNY), are a transit peptide targeting the mitochondrion. Position 742 is an N6-(pyridoxal phosphate)lysine (lysine 742).

This sequence belongs to the GcvP family. As to quaternary structure, homodimer. The glycine cleavage system is composed of four proteins: P, T, L and H. Pyridoxal 5'-phosphate serves as cofactor.

The protein localises to the mitochondrion. The enzyme catalyses N(6)-[(R)-lipoyl]-L-lysyl-[glycine-cleavage complex H protein] + glycine + H(+) = N(6)-[(R)-S(8)-aminomethyldihydrolipoyl]-L-lysyl-[glycine-cleavage complex H protein] + CO2. In terms of biological role, the glycine cleavage system catalyzes the degradation of glycine. The P protein binds the alpha-amino group of glycine through its pyridoxal phosphate cofactor; CO(2) is released and the remaining methylamine moiety is then transferred to the lipoamide cofactor of the H protein. The sequence is that of Glycine dehydrogenase (decarboxylating), mitochondrial (gcvP) from Dictyostelium discoideum (Social amoeba).